Reading from the N-terminus, the 213-residue chain is Glycerol-3-phosphate acyltransferase (213 aa).

Transmembrane regions (helical) follow at residues 3 to 23 (IIIL…GLWI), 48 to 68 (ILGV…GTLA), 71 to 91 (LPLI…LAVI), 119 to 139 (PFFL…FSMI), 144 to 164 (VVAA…GFIL), and 165 to 185 (TSYD…IIFR).

Belongs to the PlsY family. Probably interacts with PlsX.

It localises to the cell membrane. It catalyses the reaction an acyl phosphate + sn-glycerol 3-phosphate = a 1-acyl-sn-glycero-3-phosphate + phosphate. It participates in lipid metabolism; phospholipid metabolism. Catalyzes the transfer of an acyl group from acyl-phosphate (acyl-PO(4)) to glycerol-3-phosphate (G3P) to form lysophosphatidic acid (LPA). This enzyme utilizes acyl-phosphate as fatty acyl donor, but not acyl-CoA or acyl-ACP. This chain is Glycerol-3-phosphate acyltransferase, found in Lactococcus lactis subsp. cremoris (strain MG1363).